Consider the following 468-residue polypeptide: Siroheme synthase (468 aa).

Positions methionine 1 to methionine 202 are precorrin-2 dehydrogenase /sirohydrochlorin ferrochelatase. Residues aspartate 22 to isoleucine 23 and proline 43 to serine 44 contribute to the NAD(+) site. Position 126 is a phosphoserine (serine 126). Residues glycine 214 to alanine 468 are uroporphyrinogen-III C-methyltransferase. An S-adenosyl-L-methionine-binding site is contributed by proline 223. Aspartate 246 (proton acceptor) is an active-site residue. Lysine 268 functions as the Proton donor in the catalytic mechanism. Residues glycine 299–aspartate 301, threonine 329–alanine 330, methionine 381, and glycine 410 contribute to the S-adenosyl-L-methionine site.

In the N-terminal section; belongs to the precorrin-2 dehydrogenase / sirohydrochlorin ferrochelatase family. It in the C-terminal section; belongs to the precorrin methyltransferase family.

The catalysed reaction is uroporphyrinogen III + 2 S-adenosyl-L-methionine = precorrin-2 + 2 S-adenosyl-L-homocysteine + H(+). It carries out the reaction precorrin-2 + NAD(+) = sirohydrochlorin + NADH + 2 H(+). The enzyme catalyses siroheme + 2 H(+) = sirohydrochlorin + Fe(2+). It participates in cofactor biosynthesis; adenosylcobalamin biosynthesis; precorrin-2 from uroporphyrinogen III: step 1/1. It functions in the pathway cofactor biosynthesis; adenosylcobalamin biosynthesis; sirohydrochlorin from precorrin-2: step 1/1. The protein operates within porphyrin-containing compound metabolism; siroheme biosynthesis; precorrin-2 from uroporphyrinogen III: step 1/1. Its pathway is porphyrin-containing compound metabolism; siroheme biosynthesis; siroheme from sirohydrochlorin: step 1/1. It participates in porphyrin-containing compound metabolism; siroheme biosynthesis; sirohydrochlorin from precorrin-2: step 1/1. Its function is as follows. Multifunctional enzyme that catalyzes the SAM-dependent methylations of uroporphyrinogen III at position C-2 and C-7 to form precorrin-2 via precorrin-1. Then it catalyzes the NAD-dependent ring dehydrogenation of precorrin-2 to yield sirohydrochlorin. Finally, it catalyzes the ferrochelation of sirohydrochlorin to yield siroheme. This Tolumonas auensis (strain DSM 9187 / NBRC 110442 / TA 4) protein is Siroheme synthase.